We begin with the raw amino-acid sequence, 497 residues long: Galactose-1-phosphate uridylyltransferase (497 aa).

It belongs to the galactose-1-phosphate uridylyltransferase type 2 family.

It is found in the cytoplasm. It carries out the reaction alpha-D-galactose 1-phosphate + UDP-alpha-D-glucose = alpha-D-glucose 1-phosphate + UDP-alpha-D-galactose. The protein operates within carbohydrate metabolism; galactose metabolism. In Clostridium acetobutylicum (strain ATCC 824 / DSM 792 / JCM 1419 / IAM 19013 / LMG 5710 / NBRC 13948 / NRRL B-527 / VKM B-1787 / 2291 / W), this protein is Galactose-1-phosphate uridylyltransferase.